Here is a 340-residue protein sequence, read N- to C-terminus: Dihydroorotate dehydrogenase (quinone) (340 aa).

FMN is bound by residues 63 to 67 (AGLDK) and Thr-87. Substrate is bound at residue Lys-67. 112–116 (NRMGF) provides a ligand contact to substrate. Asn-140 and Asn-173 together coordinate FMN. Asn-173 serves as a coordination point for substrate. Ser-176 acts as the Nucleophile in catalysis. Substrate is bound at residue Asn-178. 2 residues coordinate FMN: Lys-218 and Thr-246. Residue 247–248 (NT) participates in substrate binding. FMN contacts are provided by residues Gly-269, Gly-298, and 319-320 (YT).

It belongs to the dihydroorotate dehydrogenase family. Type 2 subfamily. In terms of assembly, monomer. It depends on FMN as a cofactor.

It is found in the cell membrane. It carries out the reaction (S)-dihydroorotate + a quinone = orotate + a quinol. It participates in pyrimidine metabolism; UMP biosynthesis via de novo pathway; orotate from (S)-dihydroorotate (quinone route): step 1/1. Functionally, catalyzes the conversion of dihydroorotate to orotate with quinone as electron acceptor. This Methylococcus capsulatus (strain ATCC 33009 / NCIMB 11132 / Bath) protein is Dihydroorotate dehydrogenase (quinone).